Reading from the N-terminus, the 550-residue chain is Cyclopentanone 1,2-monooxygenase (550 aa).

FAD contacts are provided by residues 31 to 32 (FT), aspartate 51, tryptophan 60, aspartate 71, tyrosine 77, and valine 123.

Belongs to the FAD-binding monooxygenase family. As to quaternary structure, homotetramer. The cofactor is FAD.

It carries out the reaction cyclopentanone + NADPH + O2 + H(+) = 5-valerolactone + NADP(+) + H2O. It participates in alcohol metabolism; cyclopentanol degradation; 5-valerolactone from cyclopentanol: step 2/2. Functionally, catalyzes a Baeyer-Villiger oxidation reaction, i.e. the insertion of an oxygen atom into a carbon-carbon bond adjacent to a carbonyl, which converts ketones to esters or lactones using NADPH as an electron donor. Converts cyclopentanone to 5-valerolactone, a step in the degradation pathway of cyclopentanol. Besides cycloalkanones, can also act on methylated and other alkylated cycloalkanones, and on methylated cycloalkenones, with high enantioselectivity in some cases. Cannot use NADH instead of NADPH. The polypeptide is Cyclopentanone 1,2-monooxygenase (cpnB) (Comamonas sp. (strain NCIMB 9872)).